We begin with the raw amino-acid sequence, 404 residues long: Hemocyanin, beta-C chain unit G (404 aa).

An N-linked (GlcNAc...) asparagine glycan is attached at N38. H50 contributes to the Cu cation binding site. The cysteines at positions 56 and 65 are disulfide-linked. N60 is a glycosylation site (N-linked (GlcNAc...) asparagine). Cu cation is bound at residue H61. Residues 66-68 (CIH) constitute a cross-link (2'-(S-cysteinyl)-histidine (Cys-His)). Residues H77, H176, H180, and H207 each contribute to the Cu cation site. 2 disulfides stabilise this stretch: C166–C233 and C320–C326. N378 carries N-linked (GlcNAc...) asparagine glycosylation.

It belongs to the tyrosinase family. Hemocyanin subfamily. As to quaternary structure, decamers of large identical subunits (450 kDa), each containing 8 globular oxygen-binding functional units. The cofactor is Cu(2+).

Hemocyanins are copper-containing oxygen carriers occurring freely dissolved in the hemolymph of many mollusks and arthropods. In Helix pomatia (Roman snail), this protein is Hemocyanin, beta-C chain unit G.